Here is a 532-residue protein sequence, read N- to C-terminus: MDLAVRKMTLEGLGVSQLGAVHENLPPARLVEASVRRREGMLAENGALVCLTGKRTGRSPKDRFIVENGLTRGPVDWGPVNKPFPGERFERLLAKASAYLENLEEVYVVDAYAGADPRYRLNVQVVCEYAWQALFTRQLFRRPSREELDAFEPDWTVISVPGLLTDPEEDGTESETFVGIDFGRRVVLICGTRYAGEIKKSIFSVLNFVLPTEHGVFPMHCSANVGPGGDVALFFGLSGTGKTTLSSDPERYLIGDDEHGWSDEGIFNFEGGCYAKCIDLSREKEPQIYDAIRFGAVLENVVVDRITRRVDYSDASLTENTRAAYPLEYIEGAVDSGRAGHPAAVLFLTADAFGVLPPISVLSPEQAAYYFLSGYTAKLAGTEADMEADVEATFSACFGAPFLPLPATTYAAMLSEKLREHGSRCYLINTGWSGGPYGVGERVDIAATRQMVRAVIAGNIDESKTYTDPFFGLQVPLEVPGVPSGILNPRETWADRAAYDDQAAKLADLFRENFKKFEDGVPEGVRKAGPNV.

Residues R58, Y194, and K200 each coordinate substrate. ATP is bound by residues K200, H220, and 236 to 244 (GLSGTGKTT). K200 and H220 together coordinate Mn(2+). D257 lines the Mn(2+) pocket. ATP is bound by residues E285, R322, 442–443 (RV), and T448. Substrate is bound at residue R322.

It belongs to the phosphoenolpyruvate carboxykinase (ATP) family. Mn(2+) serves as cofactor.

The protein localises to the cytoplasm. The catalysed reaction is oxaloacetate + ATP = phosphoenolpyruvate + ADP + CO2. Its pathway is carbohydrate biosynthesis; gluconeogenesis. Involved in the gluconeogenesis. Catalyzes the conversion of oxaloacetate (OAA) to phosphoenolpyruvate (PEP) through direct phosphoryl transfer between the nucleoside triphosphate and OAA. The polypeptide is Phosphoenolpyruvate carboxykinase (ATP) (Rubrobacter xylanophilus (strain DSM 9941 / JCM 11954 / NBRC 16129 / PRD-1)).